A 277-amino-acid chain; its full sequence is NADPH-dependent 7-cyano-7-deazaguanine reductase (277 aa).

83 to 85 (IES) is a binding site for substrate. NADPH is bound at residue 85–86 (SK). The active-site Thioimide intermediate is the Cys184. Asp191 serves as the catalytic Proton donor. Residue 223–224 (HE) coordinates substrate. 252–253 (RG) is an NADPH binding site.

It belongs to the GTP cyclohydrolase I family. QueF type 2 subfamily. As to quaternary structure, homodimer.

Its subcellular location is the cytoplasm. It carries out the reaction 7-aminomethyl-7-carbaguanine + 2 NADP(+) = 7-cyano-7-deazaguanine + 2 NADPH + 3 H(+). Its pathway is tRNA modification; tRNA-queuosine biosynthesis. Catalyzes the NADPH-dependent reduction of 7-cyano-7-deazaguanine (preQ0) to 7-aminomethyl-7-deazaguanine (preQ1). This Cupriavidus pinatubonensis (strain JMP 134 / LMG 1197) (Cupriavidus necator (strain JMP 134)) protein is NADPH-dependent 7-cyano-7-deazaguanine reductase.